The chain runs to 161 residues: Cell cycle link protein (161 aa).

The tract at residues 9-21 is binding to host SKP1 protein; that stretch reads MPDDVKREIKEIY. The LXCXE motif, interaction with host RBR motif lies at 111–115; sequence LYCDE.

In terms of assembly, interacts with host SKP1. Interacts (via LXCXE domain) with host retinoblastoma-related protein 2 (RBR2). Interacts (via LXCXE domain) with human RB1. Interacts (via LXCXE domain) with retinoblastoma-related proteins (RBR).

Interacts with and disrupts the function of host retinoblastoma-related proteins RBR, which are key regulators of the cell cycle. Induces transcriptional activation of E2F-regulated S-phase and G2/M-phase-specific genes. Inactivation of the ability of RBR to arrest the cell cycle leads to the stimulation of viral DNA replication. Acts as a suppressor of RNA-mediated gene silencing, also known as post-transcriptional gene silencing (PTGS), a mechanism of plant viral defense that limits the accumulation of viral RNAs. The sequence is that of Cell cycle link protein (DNA-C) from Musa (BBTV).